Here is a 399-residue protein sequence, read N- to C-terminus: 3-dehydroquinate synthase (399 aa).

This sequence belongs to the archaeal-type DHQ synthase family.

It catalyses the reaction 2-amino-2,3,7-trideoxy-D-lyxo-hept-6-ulosonate + NAD(+) + H2O = 3-dehydroquinate + NH4(+) + NADH + H(+). Catalyzes the oxidative deamination and cyclization of 2-amino-3,7-dideoxy-D-threo-hept-6-ulosonic acid (ADH) to yield 3-dehydroquinate (DHQ), which is fed into the canonical shikimic pathway of aromatic amino acid biosynthesis. The sequence is that of 3-dehydroquinate synthase from Haloquadratum walsbyi (strain DSM 16790 / HBSQ001).